Consider the following 265-residue polypeptide: Thymidine kinase 2, mitochondrial (265 aa).

Residues 1 to 33 constitute a mitochondrion transit peptide; that stretch reads MLLWPLRGWAARALRCFGPGSRGSPASGPGPRR. Residues 20 to 32 are compositionally biased toward low complexity; it reads GSRGSPASGPGPR. The interval 20–47 is disordered; it reads GSRGSPASGPGPRRVQRRAWPPDKEQEK. ATP is bound at residue 57 to 65; it reads GNIASGKTT. The Proton acceptor role is filled by glutamate 133.

This sequence belongs to the DCK/DGK family. Monomer. As to expression, predominantly expressed in liver, pancreas, muscle, and brain.

It localises to the mitochondrion. The enzyme catalyses thymidine + ATP = dTMP + ADP + H(+). It catalyses the reaction 2'-deoxycytidine + ATP = dCMP + ADP + H(+). The catalysed reaction is 2'-deoxyuridine + ATP = dUMP + ADP + H(+). Functionally, phosphorylates thymidine, deoxycytidine, and deoxyuridine in the mitochondrial matrix. In non-replicating cells, where cytosolic dNTP synthesis is down-regulated, mtDNA synthesis depends solely on TK2 and DGUOK. Widely used as target of antiviral and chemotherapeutic agents. The polypeptide is Thymidine kinase 2, mitochondrial (Homo sapiens (Human)).